Consider the following 512-residue polypeptide: Bifunctional purine biosynthesis protein PurH (512 aa).

An MGS-like domain is found at 1–150; sequence MIGEERVVRA…KNFPAVLVLV (150 aa).

The protein belongs to the PurH family.

It carries out the reaction (6R)-10-formyltetrahydrofolate + 5-amino-1-(5-phospho-beta-D-ribosyl)imidazole-4-carboxamide = 5-formamido-1-(5-phospho-D-ribosyl)imidazole-4-carboxamide + (6S)-5,6,7,8-tetrahydrofolate. The catalysed reaction is IMP + H2O = 5-formamido-1-(5-phospho-D-ribosyl)imidazole-4-carboxamide. Its pathway is purine metabolism; IMP biosynthesis via de novo pathway; 5-formamido-1-(5-phospho-D-ribosyl)imidazole-4-carboxamide from 5-amino-1-(5-phospho-D-ribosyl)imidazole-4-carboxamide (10-formyl THF route): step 1/1. It functions in the pathway purine metabolism; IMP biosynthesis via de novo pathway; IMP from 5-formamido-1-(5-phospho-D-ribosyl)imidazole-4-carboxamide: step 1/1. This chain is Bifunctional purine biosynthesis protein PurH, found in Chloroflexus aurantiacus (strain ATCC 29366 / DSM 635 / J-10-fl).